The chain runs to 158 residues: UPF0098 protein YbhB (158 aa).

It belongs to the UPF0098 family. As to quaternary structure, homodimer.

It is found in the cytoplasm. In Escherichia coli (strain K12), this protein is UPF0098 protein YbhB (ybhB).